The following is a 118-amino-acid chain: Large ribosomal subunit protein bL20 (118 aa).

The protein belongs to the bacterial ribosomal protein bL20 family.

Its function is as follows. Binds directly to 23S ribosomal RNA and is necessary for the in vitro assembly process of the 50S ribosomal subunit. It is not involved in the protein synthesizing functions of that subunit. The polypeptide is Large ribosomal subunit protein bL20 (Acidiphilium cryptum (strain JF-5)).